Reading from the N-terminus, the 329-residue chain is Vacuolar protein sorting-associated protein 26B-like (329 aa).

Belongs to the VPS26 family.

It is found in the cytoplasm. The protein localises to the membrane. Probable component of the retromer complex, a complex required to retrieve lysosomal enzyme receptors (IGF2R and M6PR) from endosomes to the trans-Golgi network. This Danio rerio (Zebrafish) protein is Vacuolar protein sorting-associated protein 26B-like (vps26bl).